A 506-amino-acid chain; its full sequence is Cobyric acid synthase (506 aa).

The GATase cobBQ-type domain maps to 254–453; that stretch reads DLDIAVIRLP…IHGIFESDSF (200 aa). The active-site Nucleophile is the Cys334. His445 is an active-site residue.

It belongs to the CobB/CobQ family. CobQ subfamily.

The protein operates within cofactor biosynthesis; adenosylcobalamin biosynthesis. In terms of biological role, catalyzes amidations at positions B, D, E, and G on adenosylcobyrinic A,C-diamide. NH(2) groups are provided by glutamine, and one molecule of ATP is hydrogenolyzed for each amidation. The polypeptide is Cobyric acid synthase (Dehalococcoides mccartyi (strain ATCC BAA-2266 / KCTC 15142 / 195) (Dehalococcoides ethenogenes (strain 195))).